A 498-amino-acid chain; its full sequence is ATP synthase subunit alpha 1 (498 aa).

Belongs to the ATPase alpha/beta chains family. As to quaternary structure, F-type ATPases have 2 components, CF(1) - the catalytic core - and CF(0) - the membrane proton channel. CF(1) has five subunits: alpha(3), beta(3), gamma(1), delta(1), epsilon(1). CF(0) has three main subunits: a(1), b(2) and c(9-12). The alpha and beta chains form an alternating ring which encloses part of the gamma chain. CF(1) is attached to CF(0) by a central stalk formed by the gamma and epsilon chains, while a peripheral stalk is formed by the delta and b chains.

It localises to the cell membrane. The catalysed reaction is ATP + H2O + 4 H(+)(in) = ADP + phosphate + 5 H(+)(out). Functionally, produces ATP from ADP in the presence of a proton gradient across the membrane. The alpha chain is a regulatory subunit. The polypeptide is ATP synthase subunit alpha 1 (Listeria monocytogenes serotype 4b (strain F2365)).